Here is a 439-residue protein sequence, read N- to C-terminus: C4-dicarboxylate transport protein (439 aa).

Helical transmembrane passes span His-9–Pro-29, Met-45–Met-65, Leu-80–Ile-100, Gly-150–Gly-170, Ala-186–Met-206, Leu-221–Gly-241, Val-291–Leu-311, Ile-334–Val-354, and Ala-357–Ile-377.

Belongs to the dicarboxylate/amino acid:cation symporter (DAACS) (TC 2.A.23) family.

It localises to the cell inner membrane. Its function is as follows. Responsible for the transport of dicarboxylates such as succinate, fumarate, and malate from the periplasm across the membrane. The protein is C4-dicarboxylate transport protein of Citrifermentans bemidjiense (strain ATCC BAA-1014 / DSM 16622 / JCM 12645 / Bem) (Geobacter bemidjiensis).